Consider the following 366-residue polypeptide: Carbamoyl phosphate synthase small chain (366 aa).

The segment at 1–174 (MQEIPAILVL…GERYTVDNPD (174 aa)) is CPSase. L-glutamine is bound by residues S48, G226, and G228. The 189-residue stretch at 178-366 (HVVAFDYGIK…FTELMERLKN (189 aa)) folds into the Glutamine amidotransferase type-1 domain. C256 functions as the Nucleophile in the catalytic mechanism. Residues L257, Q260, N298, G300, and F301 each contribute to the L-glutamine site. Catalysis depends on residues H340 and E342.

It belongs to the CarA family. Composed of two chains; the small (or glutamine) chain promotes the hydrolysis of glutamine to ammonia, which is used by the large (or ammonia) chain to synthesize carbamoyl phosphate. Tetramer of heterodimers (alpha,beta)4.

The enzyme catalyses hydrogencarbonate + L-glutamine + 2 ATP + H2O = carbamoyl phosphate + L-glutamate + 2 ADP + phosphate + 2 H(+). It carries out the reaction L-glutamine + H2O = L-glutamate + NH4(+). It participates in amino-acid biosynthesis; L-arginine biosynthesis; carbamoyl phosphate from bicarbonate: step 1/1. The protein operates within pyrimidine metabolism; UMP biosynthesis via de novo pathway; (S)-dihydroorotate from bicarbonate: step 1/3. Small subunit of the glutamine-dependent carbamoyl phosphate synthetase (CPSase). CPSase catalyzes the formation of carbamoyl phosphate from the ammonia moiety of glutamine, carbonate, and phosphate donated by ATP, constituting the first step of 2 biosynthetic pathways, one leading to arginine and/or urea and the other to pyrimidine nucleotides. The small subunit (glutamine amidotransferase) binds and cleaves glutamine to supply the large subunit with the substrate ammonia. The sequence is that of Carbamoyl phosphate synthase small chain from Chlorobaculum tepidum (strain ATCC 49652 / DSM 12025 / NBRC 103806 / TLS) (Chlorobium tepidum).